The sequence spans 556 residues: PPE family protein PPE2 (556 aa).

Positions 8-164 are PPE; that stretch reads ASPPEVHSAL…ASYQAVSTAA (157 aa). The SH3-like stretch occupies residues 201-256; sequence QKIGYTDFYNNVIQPFINWLTNLPFLQAMFSGFDPWLPSLGNPLTFLSPANIAFAL. The segment at 319 to 340 is leucine zipper motif; that stretch reads LEQTLALLPAALPLLAAPLAPL. 2 disordered regions span residues 385 to 418 and 443 to 556; these read TPTP…PPVT and GTGV…TRVE. Positions 400–417 are enriched in pro residues; sequence PTPPPGPPPPPVTAPPPV. Positions 456–471 are enriched in low complexity; that stretch reads AEAPAAAAAPEEQVQP. Residues 472-481 show a composition bias toward basic residues; the sequence is QRRRRPKIKQ. The Nuclear localization signal signature appears at 473 to 481; the sequence is RRRRPKIKQ.

It belongs to the mycobacterial PPE family.

Its subcellular location is the secreted. The protein localises to the host cytoplasm. The protein resides in the host nucleus. In terms of biological role, inhibits nitric oxide (NO) production in activated macrophages. Acts by inhibiting expression of the host inducible nitric oxide synthase (iNOS). PPE2 is translocated into the host macrophage nucleus, where it interacts with a GATA-binding site overlapping with the TATA box of NOS2 (iNOS) promoter, and strongly inhibits NOS2 gene transcription. Reduction in NO production in turn facilitates intracellular survival of the bacilli inside the macrophage. In addition, disrupts the assembly of NADPH oxidase complex, which inhibits NADPH oxidase-mediated reactive oxygen species (ROS) generation in macrophages and favors M.tuberculosis survival. Acts by interacting with NCF2, the cytosolic subunit of NADPH oxidase, and preventing translocation of NCF2 and NCF1 to the membrane, which causes a reduction of the functional assembly of NADPH oxidase complex and a decrease in NADPH oxidase activity. This chain is PPE family protein PPE2 (PPE2), found in Mycobacterium tuberculosis (strain ATCC 25618 / H37Rv).